Reading from the N-terminus, the 84-residue chain is RNA-binding protein Hfq (84 aa).

Residues 10–70 form the Sm domain; it reads DLFLNVLRRD…ISTIMPFRPV (61 aa).

It belongs to the Hfq family. As to quaternary structure, homohexamer.

Its function is as follows. RNA chaperone that binds small regulatory RNA (sRNAs) and mRNAs to facilitate mRNA translational regulation in response to envelope stress, environmental stress and changes in metabolite concentrations. Also binds with high specificity to tRNAs. The sequence is that of RNA-binding protein Hfq from Moorella thermoacetica (strain ATCC 39073 / JCM 9320).